The sequence spans 344 residues: Coproporphyrin III ferrochelatase (344 aa).

Serine 52 serves as a coordination point for Fe-coproporphyrin III. Position 113 (cysteine 113) interacts with [2Fe-2S] cluster. Position 116 (tyrosine 116) interacts with Fe-coproporphyrin III. 2 residues coordinate Fe(2+): histidine 172 and glutamate 255. The [2Fe-2S] cluster site is built by cysteine 316, cysteine 325, and cysteine 330.

It belongs to the ferrochelatase family. It depends on [2Fe-2S] cluster as a cofactor.

It is found in the cytoplasm. The enzyme catalyses Fe-coproporphyrin III + 2 H(+) = coproporphyrin III + Fe(2+). It participates in porphyrin-containing compound metabolism; protoheme biosynthesis. Its function is as follows. Involved in coproporphyrin-dependent heme b biosynthesis. Catalyzes the insertion of ferrous iron into coproporphyrin III to form Fe-coproporphyrin III. This chain is Coproporphyrin III ferrochelatase, found in Mycobacterium bovis (strain ATCC BAA-935 / AF2122/97).